The following is a 195-amino-acid chain: Rubrerythrin-1 (195 aa).

Positions 3–150 constitute a Ferritin-like diiron domain; it reads SLKGTKTAEN…ALLKNIEENK (148 aa). 10 residues coordinate Fe(3+): glutamate 20, glutamate 53, glutamate 98, glutamate 101, glutamate 132, histidine 135, cysteine 162, cysteine 165, cysteine 178, and cysteine 181. The 35-residue stretch at 157-191 folds into the Rubredoxin-like domain; it reads VKFWKCIKCGYIFEGKTAPKVCPACLHPQAYFEIL.

As to quaternary structure, homodimer. Requires Fe(3+) as cofactor.

It carries out the reaction H2O2 + NADH + H(+) = NAD(+) + 2 H2O. With respect to regulation, rubredoxin (Rd) increases the NADH consumption rate by serving as an intermediary electron-transfer shuttle between NROR and RubY. Functions as the terminal component of an NADH peroxidase (NADH:H(2)O(2) oxidoreductase) when using NADH:rubredoxin oxidoreductase (NROR) as the electron transport intermediary from NADH to RubY. The chain is Rubrerythrin-1 (rbr1) from Clostridium acetobutylicum (strain ATCC 824 / DSM 792 / JCM 1419 / IAM 19013 / LMG 5710 / NBRC 13948 / NRRL B-527 / VKM B-1787 / 2291 / W).